The following is a 207-amino-acid chain: Guanylate kinase (207 aa).

The region spanning 4 to 184 is the Guanylate kinase-like domain; that stretch reads GTLYIVSAPS…ALTDLKTIIR (181 aa). 11–18 is a binding site for ATP; the sequence is APSGAGKS.

The protein belongs to the guanylate kinase family.

It is found in the cytoplasm. It catalyses the reaction GMP + ATP = GDP + ADP. Its function is as follows. Essential for recycling GMP and indirectly, cGMP. The polypeptide is Guanylate kinase (Escherichia coli O6:K15:H31 (strain 536 / UPEC)).